A 225-amino-acid polypeptide reads, in one-letter code: MAIWLLCNGVLLIVAYFLGSFPTGYLLGKALQGIDIREHGSKSTGATNVLRTLGKGPGLATLGVDICKGAGAVALVRWAYGNPMFLTQAPATTNIGLWLSLVVIMAGLMAILGHSKSVWLNFTGGKSVATGLGVLLVMSWTVGLAALGIFALVVSLSRIVSLSSISAAISLPVLMFVAKEPLAYVLFSITAGVYVVWRHWANIQRLLAGTEPRLGQKKAVSTDAT.

The next 6 membrane-spanning stretches (helical) occupy residues 1–21 (MAIWLLCNGVLLIVAYFLGSF), 56–76 (GPGLATLGVDICKGAGAVALV), 95–115 (IGLWLSLVVIMAGLMAILGHS), 134–154 (VLLVMSWTVGLAALGIFALVV), 159–178 (IVSLSSISAAISLPVLMFVA), and 182–201 (LAYVLFSITAGVYVVWRHWA).

Belongs to the PlsY family. As to quaternary structure, probably interacts with PlsX.

It localises to the cell inner membrane. It carries out the reaction an acyl phosphate + sn-glycerol 3-phosphate = a 1-acyl-sn-glycero-3-phosphate + phosphate. Its pathway is lipid metabolism; phospholipid metabolism. In terms of biological role, catalyzes the transfer of an acyl group from acyl-phosphate (acyl-PO(4)) to glycerol-3-phosphate (G3P) to form lysophosphatidic acid (LPA). This enzyme utilizes acyl-phosphate as fatty acyl donor, but not acyl-CoA or acyl-ACP. This Acaryochloris marina (strain MBIC 11017) protein is Glycerol-3-phosphate acyltransferase.